Reading from the N-terminus, the 195-residue chain is ATP-dependent Clp protease proteolytic subunit (195 aa).

Ser98 functions as the Nucleophile in the catalytic mechanism. Residue His123 is part of the active site.

The protein belongs to the peptidase S14 family. In terms of assembly, fourteen ClpP subunits assemble into 2 heptameric rings which stack back to back to give a disk-like structure with a central cavity, resembling the structure of eukaryotic proteasomes.

It is found in the cytoplasm. The enzyme catalyses Hydrolysis of proteins to small peptides in the presence of ATP and magnesium. alpha-casein is the usual test substrate. In the absence of ATP, only oligopeptides shorter than five residues are hydrolyzed (such as succinyl-Leu-Tyr-|-NHMec, and Leu-Tyr-Leu-|-Tyr-Trp, in which cleavage of the -Tyr-|-Leu- and -Tyr-|-Trp bonds also occurs).. Functionally, cleaves peptides in various proteins in a process that requires ATP hydrolysis. Has a chymotrypsin-like activity. Plays a major role in the degradation of misfolded proteins. This Thermodesulfovibrio yellowstonii (strain ATCC 51303 / DSM 11347 / YP87) protein is ATP-dependent Clp protease proteolytic subunit.